The chain runs to 326 residues: Peroxidase 39 (326 aa).

Positions 1–23 (MTRFGLALLMILVIQGLVTFSEA) are cleaved as a signal peptide. Disulfide bonds link C34–C114, C67–C72, C120–C322, and C199–C232. Residue H65 is the Proton acceptor of the active site. 5 residues coordinate Ca(2+): D66, V69, G71, D73, and S75. N79 carries an N-linked (GlcNAc...) asparagine glycan. P162 provides a ligand contact to substrate. N-linked (GlcNAc...) asparagine glycosylation is present at N167. H192 contributes to the heme b binding site. A Ca(2+)-binding site is contributed by T193. N-linked (GlcNAc...) asparagine glycosylation is found at N208 and N238. Positions 245, 248, and 253 each coordinate Ca(2+).

This sequence belongs to the peroxidase family. Classical plant (class III) peroxidase subfamily. The cofactor is heme b. Requires Ca(2+) as cofactor. In terms of tissue distribution, slightly expressed in roots.

It is found in the secreted. It carries out the reaction 2 a phenolic donor + H2O2 = 2 a phenolic radical donor + 2 H2O. In terms of biological role, removal of H(2)O(2), oxidation of toxic reductants, biosynthesis and degradation of lignin, suberization, auxin catabolism, response to environmental stresses such as wounding, pathogen attack and oxidative stress. These functions might be dependent on each isozyme/isoform in each plant tissue. This Arabidopsis thaliana (Mouse-ear cress) protein is Peroxidase 39 (PER39).